The chain runs to 498 residues: Probable global transactivator (498 aa).

The 164-residue stretch at R43–R206 folds into the Helicase ATP-binding domain. A55–T63 provides a ligand contact to ATP. The DEAH box signature appears at D157–H160. One can recognise a Helicase C-terminal domain in the interval E337 to K493.

This sequence belongs to the SNF2/RAD54 helicase family.

This chain is Probable global transactivator (GTA), found in Orgyia pseudotsugata (Douglas-fir tussock moth).